We begin with the raw amino-acid sequence, 87 residues long: Small ribosomal subunit protein bS20 (87 aa).

This sequence belongs to the bacterial ribosomal protein bS20 family.

Its function is as follows. Binds directly to 16S ribosomal RNA. The sequence is that of Small ribosomal subunit protein bS20 from Shigella flexneri serotype 5b (strain 8401).